A 432-amino-acid polypeptide reads, in one-letter code: Glutamate-1-semialdehyde 2,1-aminomutase (432 aa).

Lysine 272 carries the post-translational modification N6-(pyridoxal phosphate)lysine.

Belongs to the class-III pyridoxal-phosphate-dependent aminotransferase family. HemL subfamily. Homodimer. Pyridoxal 5'-phosphate is required as a cofactor.

It localises to the cytoplasm. The enzyme catalyses (S)-4-amino-5-oxopentanoate = 5-aminolevulinate. Its pathway is porphyrin-containing compound metabolism; protoporphyrin-IX biosynthesis; 5-aminolevulinate from L-glutamyl-tRNA(Glu): step 2/2. It participates in porphyrin-containing compound metabolism; chlorophyll biosynthesis. In Picosynechococcus sp. (strain ATCC 27264 / PCC 7002 / PR-6) (Agmenellum quadruplicatum), this protein is Glutamate-1-semialdehyde 2,1-aminomutase.